Reading from the N-terminus, the 2255-residue chain is Non-reducing polyketide synthase nvfA (2255 aa).

Residues I13–E251 are N-terminal acylcarrier protein transacylase domain (SAT). The region spanning V365–Q781 is the Ketosynthase family 3 (KS3) domain. Catalysis depends on for beta-ketoacyl synthase activity residues C530, H665, and H704. The segment at L887 to A1187 is malonyl-CoA:ACP transacylase (MAT) domain. The active-site For acyl/malonyl transferase activity is S974. The N-terminal hotdog fold stretch occupies residues E1229–S1357. The PKS/mFAS DH domain occupies E1229 to T1536. Positions G1232 to L1535 are product template (PT) domain. H1262 acts as the Proton acceptor; for dehydratase activity in catalysis. Residues S1385–T1536 are C-terminal hotdog fold. D1443 acts as the Proton donor; for dehydratase activity in catalysis. The Carrier domain maps to T1581 to A1655. S1615 is subject to O-(pantetheine 4'-phosphoryl)serine. The segment at H1809–N2042 is methyltransferase (CMeT) domain. The segment at L2109–Y2227 is thioesterase (TE) domain. The For thioesterase activity role is filled by S2194.

The enzyme catalyses 3 malonyl-CoA + acetyl-CoA + 2 S-adenosyl-L-methionine = 3,5-dimethylorsellinate + 2 S-adenosyl-L-homocysteine + 3 CO2 + 4 CoA. It participates in secondary metabolite biosynthesis; terpenoid biosynthesis. Its function is as follows. Non-reducing polyketide synthase; part of the gene cluster that mediates the biosynthesis of novofumigatonin, a heavily oxygenated meroterpenoid containing a unique orthoester moiety. The first step of the pathway is the synthesis of 3,5-dimethylorsellinic acid (DMOA) by the polyketide synthase nvfA via condensation of one acetyl-CoA starter unit with 3 malonyl-CoA units and 2 methylations. DMOA is then converted to farnesyl-DMOA by the farnesyltransferase nvfB. Epoxydation by FAD-dependent monooxygenase nvfK, followed by a protonation-initiated cyclization catalyzed by the terpene cyclase nvfL leads to the production of asnavolin H. The short chain dehydrogenase nvfC then as a 3-OH dehydrogenase of asnovolin H to yield chemesin D. There are two branches to synthesize asnovolin A from chemesin D. In one branch, chemesin D undergoes Baeyer-Villiger oxidation by nvfH, methylation by nvfJ, and enoyl reduction by the nvfM D enoylreductase that reduces the double bond between C-5'and C-6', to form respectively asnovolin I, asnovolin K, and asnovolin A. In the other branch, the methylation precedes the Baeyer-Villiger oxidation and the enoyl reduction to yield asnovolin A via the asnovolin J intermediate. Asnovolin A is further converted to fumigatonoid A by the Fe(II)/2-oxoglutarate-dependent dioxygenase nvfI that catalyzes an endoperoxidation reaction. The alpha/beta hydrolase nvfD then acts as an epimerase that converts fumigatonoid A to its C-5' epimer, which then undergoes spontaneous or nvfD-catalyzed lactonization. The following step utilizes the ketoreductase nvfG to produce fumigatonoid B. The dioxygenase nvfE further converts fumigatonoid B into fumigatonoid C. Finally the Fe(II)/2-oxoglutarate-dependent dioxygenase nvfF catalyzes two rounds of oxidation to transform fumigatonoid C into the end product, novofumigatonin A. This chain is Non-reducing polyketide synthase nvfA, found in Aspergillus novofumigatus (strain IBT 16806).